Reading from the N-terminus, the 173-residue chain is Crossover junction endodeoxyribonuclease RuvC (173 aa).

Catalysis depends on residues Asp8, Glu67, and Asp139. Positions 8, 67, and 139 each coordinate Mg(2+).

The protein belongs to the RuvC family. Homodimer which binds Holliday junction (HJ) DNA. The HJ becomes 2-fold symmetrical on binding to RuvC with unstacked arms; it has a different conformation from HJ DNA in complex with RuvA. In the full resolvosome a probable DNA-RuvA(4)-RuvB(12)-RuvC(2) complex forms which resolves the HJ. It depends on Mg(2+) as a cofactor.

Its subcellular location is the cytoplasm. It carries out the reaction Endonucleolytic cleavage at a junction such as a reciprocal single-stranded crossover between two homologous DNA duplexes (Holliday junction).. In terms of biological role, the RuvA-RuvB-RuvC complex processes Holliday junction (HJ) DNA during genetic recombination and DNA repair. Endonuclease that resolves HJ intermediates. Cleaves cruciform DNA by making single-stranded nicks across the HJ at symmetrical positions within the homologous arms, yielding a 5'-phosphate and a 3'-hydroxyl group; requires a central core of homology in the junction. The consensus cleavage sequence is 5'-(A/T)TT(C/G)-3'. Cleavage occurs on the 3'-side of the TT dinucleotide at the point of strand exchange. HJ branch migration catalyzed by RuvA-RuvB allows RuvC to scan DNA until it finds its consensus sequence, where it cleaves and resolves the cruciform DNA. The protein is Crossover junction endodeoxyribonuclease RuvC of Erwinia tasmaniensis (strain DSM 17950 / CFBP 7177 / CIP 109463 / NCPPB 4357 / Et1/99).